The sequence spans 133 residues: Small ribosomal subunit protein uS8 (133 aa).

This sequence belongs to the universal ribosomal protein uS8 family. As to quaternary structure, part of the 30S ribosomal subunit. Contacts proteins S5 and S12.

Functionally, one of the primary rRNA binding proteins, it binds directly to 16S rRNA central domain where it helps coordinate assembly of the platform of the 30S subunit. The polypeptide is Small ribosomal subunit protein uS8 (Oenococcus oeni (strain ATCC BAA-331 / PSU-1)).